A 99-amino-acid chain; its full sequence is Integration host factor subunit alpha (99 aa).

Residues 49 to 72 (FGNFDLRDKNQRPGRNPKTGEDIP) form a disordered region.

The protein belongs to the bacterial histone-like protein family. As to quaternary structure, heterodimer of an alpha and a beta chain.

Its function is as follows. This protein is one of the two subunits of integration host factor, a specific DNA-binding protein that functions in genetic recombination as well as in transcriptional and translational control. The polypeptide is Integration host factor subunit alpha (Escherichia coli O9:H4 (strain HS)).